The following is a 504-amino-acid chain: Probable cytosol aminopeptidase (504 aa).

Positions 276 and 281 each coordinate Mn(2+). Lysine 288 is an active-site residue. 3 residues coordinate Mn(2+): aspartate 299, aspartate 358, and glutamate 360. Residue arginine 362 is part of the active site.

It belongs to the peptidase M17 family. Mn(2+) serves as cofactor.

The protein localises to the cytoplasm. The catalysed reaction is Release of an N-terminal amino acid, Xaa-|-Yaa-, in which Xaa is preferably Leu, but may be other amino acids including Pro although not Arg or Lys, and Yaa may be Pro. Amino acid amides and methyl esters are also readily hydrolyzed, but rates on arylamides are exceedingly low.. The enzyme catalyses Release of an N-terminal amino acid, preferentially leucine, but not glutamic or aspartic acids.. Presumably involved in the processing and regular turnover of intracellular proteins. Catalyzes the removal of unsubstituted N-terminal amino acids from various peptides. This chain is Probable cytosol aminopeptidase, found in Bordetella avium (strain 197N).